Consider the following 287-residue polypeptide: Acetyl-coenzyme A carboxylase carboxyl transferase subunit beta (287 aa).

One can recognise a CoA carboxyltransferase N-terminal domain in the interval 25–287 (IWTKCSGCVQ…KLTQQSFSEK (263 aa)). 4 residues coordinate Zn(2+): C29, C32, C48, and C51. The C4-type zinc-finger motif lies at 29 to 51 (CSGCVQLLYTKELERNLQVCPKC).

The protein belongs to the AccD/PCCB family. In terms of assembly, acetyl-CoA carboxylase is a heterohexamer composed of biotin carboxyl carrier protein (AccB), biotin carboxylase (AccC) and two subunits each of ACCase subunit alpha (AccA) and ACCase subunit beta (AccD). Requires Zn(2+) as cofactor.

It is found in the cytoplasm. It catalyses the reaction N(6)-carboxybiotinyl-L-lysyl-[protein] + acetyl-CoA = N(6)-biotinyl-L-lysyl-[protein] + malonyl-CoA. It functions in the pathway lipid metabolism; malonyl-CoA biosynthesis; malonyl-CoA from acetyl-CoA: step 1/1. In terms of biological role, component of the acetyl coenzyme A carboxylase (ACC) complex. Biotin carboxylase (BC) catalyzes the carboxylation of biotin on its carrier protein (BCCP) and then the CO(2) group is transferred by the transcarboxylase to acetyl-CoA to form malonyl-CoA. This chain is Acetyl-coenzyme A carboxylase carboxyl transferase subunit beta, found in Blochmanniella floridana.